We begin with the raw amino-acid sequence, 336 residues long: D-erythrose-4-phosphate dehydrogenase (336 aa).

Arginine 11–isoleucine 12 serves as a coordination point for NAD(+). Substrate-binding positions include serine 153 to threonine 155, arginine 199, threonine 212 to arginine 213, and arginine 235. The active-site Nucleophile is the cysteine 154. Asparagine 317 contributes to the NAD(+) binding site.

Belongs to the glyceraldehyde-3-phosphate dehydrogenase family. Epd subfamily. Homotetramer.

It is found in the cytoplasm. It catalyses the reaction D-erythrose 4-phosphate + NAD(+) + H2O = 4-phospho-D-erythronate + NADH + 2 H(+). It functions in the pathway cofactor biosynthesis; pyridoxine 5'-phosphate biosynthesis; pyridoxine 5'-phosphate from D-erythrose 4-phosphate: step 1/5. Functionally, catalyzes the NAD-dependent conversion of D-erythrose 4-phosphate to 4-phosphoerythronate. The polypeptide is D-erythrose-4-phosphate dehydrogenase (Alteromonas mediterranea (strain DSM 17117 / CIP 110805 / LMG 28347 / Deep ecotype)).